The chain runs to 423 residues: Zinc finger protein Gfi-1 (423 aa).

The tract at residues 1-20 is SNAG domain; that stretch reads MPRSFLVKSKKAHSYHQPRS. The disordered stretch occupies residues 1–102; that stretch reads MPRSFLVKSK…PPSPSVSPAS (102 aa). Phosphoserine is present on residues serine 20 and serine 57. A compositionally biased stretch (basic and acidic residues) spans 48 to 57; it reads SKMEPRERLS. Residues 141–258 are required for interaction with RELA; sequence RQCSALERSA…LLLGGGSYKC (118 aa). C2H2-type zinc fingers lie at residues 256 to 279, 285 to 307, 313 to 335, 341 to 363, 369 to 391, and 397 to 420; these read YKCIKCSKVFSTPHGLEVHVRRSH, FACEMCGKTFGHAVSLEQHKAVH, FDCKICGKSFKRSSTLSTHLLIH, YPCQYCGKRFHQKSDMKKHTFIH, HKCQVCGKAFSQSSNLITHSRKH, and FGCDLCGKGFQRKVDLRRHRETQH.

As to quaternary structure, interacts with U2AF1L4. Component of RCOR-GFI-KDM1A-HDAC complexes. Interacts directly with RCOR1, KDM1A and HDAC2. Also interacts with HDAC1. regions. Interacts (via the zinc-finger domain) with ARIH2; the interaction prevents GFI1 ubiquitination and proteasomal degradation. Interacts with PIAS3; the interaction relieves the inhibitory effect of PIAS3 on STAT3-mediated transcriptional activity. Forms a complex with EHMT2 and HDAC1 to promote 'Lys-9' dimethylation of H3 (H3K9Me2) and repress expression of target genes. Interacts directly with EHMT2. Component of the GFI1-AJUBA-HDAC1 repressor complex. Interacts directly with AJUBA (via ITS LIM domains); the interaction results in the HDAC-dependent corepression of a subset of GFI1 target genes and, occurs independent of the SNAG domain. Interacts with SPI1; the interaction inhibits SPI1 transcriptional activity targeted at macrophage-specific genes, repressing macrophage differentiation of myeloid progenitor cells and promoting granulocyte commitment. Interacts with RUNX1T1; the interaction represses HDAC-mediated transcriptional activity. Interacts with RELA; the interaction occurs on liposaccharide (LPS) stimulation controls RELA DNA binding activity and regulates endotoxin-mediated TOLL-like receptor inflammatory response. Interacts (via the C-terminal zinc fingers) with ZBTB17; the interaction results in the recruitment of GFI1 to the CDKN1A/p21 promoter and repression of CDKN1A/p21 transcription. Post-translationally, ubiquitinated. As to expression, restricted to lymphoid tissues and testes in adult animals.

It localises to the nucleus. In terms of biological role, transcription repressor essential for hematopoiesis. Functions in a cell-context and development-specific manner. Binds to 5'-TAAATCAC[AT]GCA-3' in the promoter region of a large number of genes. Component of several complexes, including the EHMT2-GFI1-HDAC1, AJUBA-GFI1-HDAC1 and RCOR-GFI-KDM1A-HDAC complexes, that suppress, via histone deacetylase (HDAC) recruitment, a number of genes implicated in multilineage blood cell development. Regulates neutrophil differentiation, promotes proliferation of lymphoid cells, and is required for granulocyte development. Inhibits SPI1 transcriptional activity at macrophage-specific genes, repressing macrophage differentiation of myeloid progenitor cells and promoting granulocyte commitment. Mediates, together with U2AF1L4, the alternative splicing of CD45 and controls T-cell receptor signaling. Regulates the endotoxin-mediated Toll-like receptor (TLR) inflammatory response by antagonizing RELA. Cooperates with CBFA2T2 to regulate ITGB1-dependent neurite growth. Controls cell-cycle progression by repressing CDKNIA/p21 transcription in response to TGFB1 via recruitment of GFI1 by ZBTB17 to the CDKNIA/p21 and CDKNIB promoters. Required for the maintenance of inner ear hair cells. In addition to its role in transcription, acts as a substrate adapter for PRMT1 in the DNA damage response: facilitates the recognition of TP53BP1 and MRE11 substrates by PRMT1, promoting their methylation and the DNA damage response. The sequence is that of Zinc finger protein Gfi-1 (Gfi1) from Rattus norvegicus (Rat).